Here is a 475-residue protein sequence, read N- to C-terminus: Ribulose bisphosphate carboxylase large chain (475 aa).

The propeptide occupies 1–2 (MS). Residue proline 3 is modified to N-acetylproline. Positions 123 and 173 each coordinate substrate. Catalysis depends on lysine 175, which acts as the Proton acceptor. Residue lysine 177 coordinates substrate. Residues lysine 201, aspartate 203, and glutamate 204 each contribute to the Mg(2+) site. Residue lysine 201 is modified to N6-carboxylysine. Histidine 294 (proton acceptor) is an active-site residue. Residues arginine 295, histidine 327, and serine 379 each contribute to the substrate site.

Belongs to the RuBisCO large chain family. Type I subfamily. Heterohexadecamer of 8 large chains and 8 small chains; disulfide-linked. The disulfide link is formed within the large subunit homodimers. Mg(2+) serves as cofactor. The disulfide bond which can form in the large chain dimeric partners within the hexadecamer appears to be associated with oxidative stress and protein turnover.

The protein resides in the plastid. Its subcellular location is the chloroplast. The enzyme catalyses 2 (2R)-3-phosphoglycerate + 2 H(+) = D-ribulose 1,5-bisphosphate + CO2 + H2O. The catalysed reaction is D-ribulose 1,5-bisphosphate + O2 = 2-phosphoglycolate + (2R)-3-phosphoglycerate + 2 H(+). Functionally, ruBisCO catalyzes two reactions: the carboxylation of D-ribulose 1,5-bisphosphate, the primary event in carbon dioxide fixation, as well as the oxidative fragmentation of the pentose substrate in the photorespiration process. Both reactions occur simultaneously and in competition at the same active site. This chain is Ribulose bisphosphate carboxylase large chain, found in Gnetum parvifolium (Small-leaved jointfir).